The following is a 428-amino-acid chain: Glutamate-1-semialdehyde 2,1-aminomutase 1 (428 aa).

At K268 the chain carries N6-(pyridoxal phosphate)lysine.

The protein belongs to the class-III pyridoxal-phosphate-dependent aminotransferase family. HemL subfamily. In terms of assembly, homodimer. Requires pyridoxal 5'-phosphate as cofactor.

The protein localises to the cytoplasm. It catalyses the reaction (S)-4-amino-5-oxopentanoate = 5-aminolevulinate. It participates in porphyrin-containing compound metabolism; protoporphyrin-IX biosynthesis; 5-aminolevulinate from L-glutamyl-tRNA(Glu): step 2/2. The chain is Glutamate-1-semialdehyde 2,1-aminomutase 1 from Geobacillus kaustophilus (strain HTA426).